A 2039-amino-acid polypeptide reads, in one-letter code: Calcium-channel protein CCH1 (2039 aa).

Disordered stretches follow at residues 1–171 (MQGR…PPRS) and 206–288 (PQLK…PQKE). Positions 64–80 (STEEKKGDEYNGNDKDS) are enriched in basic and acidic residues. Residue Asn98 is glycosylated (N-linked (GlcNAc...) asparagine). Low complexity-rich tracts occupy residues 122 to 132 (SPSTKSAKSSS) and 147 to 164 (FSSY…SPSS). Positions 209-226 (KSEKSRPVSDVGEDRGEG) are enriched in basic and acidic residues. N-linked (GlcNAc...) asparagine glycans are attached at residues Asn257 and Asn269. Residues 271–281 (SRKKPSPKFFH) are compositionally biased toward basic residues. The residue at position 284 (Ser284) is a Phosphoserine. Residues 346–366 (YSLLYNTLLTFYAILLAIRTY) traverse the membrane as a helical segment. N-linked (GlcNAc...) asparagine glycosylation occurs at Asn379. Residues 384 to 404 (FIFILSACFTGNDIAKIIAFG) form a helical membrane-spanning segment. The N-linked (GlcNAc...) asparagine glycan is linked to Asn559. 3 consecutive transmembrane segments (helical) span residues 563–583 (MLVY…QGSF), 658–678 (IVNS…TDLM), and 691–711 (LFFI…LIAV). Residues Asn754 and Asn760 are each glycosylated (N-linked (GlcNAc...) asparagine). The next 3 membrane-spanning stretches (helical) occupy residues 766 to 786 (LAIY…DIGM), 809 to 829 (ISIV…PNMW), and 841 to 861 (FIIS…VLGH). N-linked (GlcNAc...) asparagine glycans are attached at residues Asn882 and Asn900. The next 2 helical transmembrane spans lie at 904–924 (FYFF…EGVI) and 942–962 (SFLS…LYAL). Asn968 carries N-linked (GlcNAc...) asparagine glycosylation. Residues 978–998 (FFIIWFLLSNSVILNIFIALI) traverse the membrane as a helical segment. The N-linked (GlcNAc...) asparagine glycan is linked to Asn1153. The helical transmembrane segment at 1207 to 1227 (VFVFIFALATILLIVCSCYVT) threads the bilayer. N-linked (GlcNAc...) asparagine glycosylation occurs at Asn1240. A run of 2 helical transmembrane segments spans residues 1247–1267 (CAFI…DGFI) and 1277–1297 (PWNF…IAYL). Residue Asn1302 is glycosylated (N-linked (GlcNAc...) asparagine). 2 helical membrane-spanning segments follow: residues 1340–1360 (IFEA…WGLS) and 1408–1428 (FASA…VDLL). Residue Asn1433 is glycosylated (N-linked (GlcNAc...) asparagine). A run of 5 helical transmembrane segments spans residues 1452–1472 (FLVL…VSFI), 1529–1549 (NFYY…MLLS), 1554–1574 (PGNL…VFLI), 1596–1616 (IRLS…HVPA), and 1618–1638 (HYWF…FIIP). Asn1640 carries N-linked (GlcNAc...) asparagine glycosylation. The helical transmembrane segment at 1654-1674 (LPPILSLTYTWGVLFLVYAIA) threads the bilayer. N-linked (GlcNAc...) asparagine glycans are attached at residues Asn1687 and Asn1732. A helical membrane pass occupies residues 1748–1768 (LMSWNIISMYIFVNMFVSLII). Residues Asn1770 and Asn1785 are each glycosylated (N-linked (GlcNAc...) asparagine). The EF-hand domain occupies 1787–1822 (SEIKKYIEAWSKFDTDGTGELELSYLPRIMHSFDGP). A disordered region spans residues 2011–2039 (PRMNQDSTMEPPEEPIDNNDDSANDLIDR). Residues 2021-2033 (PPEEPIDNNDDSA) show a composition bias toward acidic residues.

The protein belongs to the calcium channel alpha-1 subunit (TC 1.A.1.11) family. In terms of assembly, interacts with MID1 to form a Ca(2+) influx channel.

It is found in the cell membrane. Functionally, voltage-gated, high-affinity calcium channel that functions together with MID1 to mediate calcium entry into cells. Required during conditions of environmental stress. The protein is Calcium-channel protein CCH1 (CCH1) of Saccharomyces cerevisiae (strain ATCC 204508 / S288c) (Baker's yeast).